Here is a 432-residue protein sequence, read N- to C-terminus: Peptidase B (432 aa).

Mn(2+) contacts are provided by K196 and D201. K208 is an active-site residue. 3 residues coordinate Mn(2+): D219, D278, and E280. R282 is an active-site residue.

The protein belongs to the peptidase M17 family. As to quaternary structure, homohexamer. The cofactor is Mn(2+).

It is found in the cytoplasm. It carries out the reaction Release of an N-terminal amino acid, Xaa, from a peptide or arylamide. Xaa is preferably Glu or Asp but may be other amino acids, including Leu, Met, His, Cys and Gln.. Its function is as follows. Probably plays an important role in intracellular peptide degradation. This is Peptidase B from Yersinia pestis bv. Antiqua (strain Antiqua).